The sequence spans 40 residues: uncharacterized protein (40 aa).

This is an uncharacterized protein from Myxococcus xanthus (strain DK1622).